A 438-amino-acid chain; its full sequence is Ribosomal protein uS12 methylthiotransferase RimO (438 aa).

In terms of domain architecture, MTTase N-terminal spans proline 4–proline 114. 6 residues coordinate [4Fe-4S] cluster: cysteine 13, cysteine 49, cysteine 78, cysteine 146, cysteine 150, and cysteine 153. The 239-residue stretch at leucine 132–asparagine 370 folds into the Radical SAM core domain. In terms of domain architecture, TRAM spans lysine 373–valine 438.

It belongs to the methylthiotransferase family. RimO subfamily. [4Fe-4S] cluster serves as cofactor.

It localises to the cytoplasm. The enzyme catalyses L-aspartate(89)-[ribosomal protein uS12]-hydrogen + (sulfur carrier)-SH + AH2 + 2 S-adenosyl-L-methionine = 3-methylsulfanyl-L-aspartate(89)-[ribosomal protein uS12]-hydrogen + (sulfur carrier)-H + 5'-deoxyadenosine + L-methionine + A + S-adenosyl-L-homocysteine + 2 H(+). In terms of biological role, catalyzes the methylthiolation of an aspartic acid residue of ribosomal protein uS12. This chain is Ribosomal protein uS12 methylthiotransferase RimO, found in Brucella ovis (strain ATCC 25840 / 63/290 / NCTC 10512).